The chain runs to 424 residues: Attachment protein G3P (424 aa).

Residues 1 to 18 form the signal peptide; the sequence is MKKLLFAIPLVVPFYSHS. An N1 region spans residues 19 to 85; sequence AETVESCLAK…VPIGLAIPEN (67 aa). Disulfide bonds link cysteine 25–cysteine 54 and cysteine 64–cysteine 71. Positions 83–147 are disordered; it reads PENEGGGSEG…NPNPSLEESQ (65 aa). Positions 86–104 are G1 (Gly-rich linker); that stretch reads EGGGSEGGGSEGGGSEGGG. Positions 86–105 are enriched in gly residues; the sequence is EGGGSEGGGSEGGGSEGGGT. Residues 105–141 form a hinge region; it reads TKPPEYGDTPIPGYTYINPLDGTYPPGTEQNPANPNP. Polar residues predominate over residues 132 to 147; that stretch reads TEQNPANPNPSLEESQ. An N2 region spans residues 142–228; sequence SLEESQPLNT…CEYQGQSSDL (87 aa). Cysteine 206 and cysteine 219 are disulfide-bonded. The interval 222–279 is disordered; the sequence is QGQSSDLPQPPVNAGGGSGGGSGGGSEGGGSEGGGSEGGGSEGGGSGGGSGSGDFDYE. The span at 235–273 shows a compositional bias: gly residues; that stretch reads AGGGSGGGSGGGSEGGGSEGGGSEGGGSEGGGSGGGSGS. Positions 253-262 are not essential for gene 3 function; the sequence is EGGGSEGGGS. The interval 275–424 is CT; sequence DFDYEKMANA…FANILRNKES (150 aa). The helical transmembrane segment at 398–418 threads the bilayer; that stretch reads VFAFLLYVATFMYVFSTFANI.

The protein belongs to the inovirus G3P protein family. As to quaternary structure, interacts with G6P; this interaction is required for proper integration of G3P and G6P into the virion. Interacts with G8P. Interacts with the tip of the host pilus. Interacts (via N-terminus) with host TolA. Interacts (via transmembrane domain) with host TolQ (via 2nd and 3rd transmembrane domains); this interaction allows the phage translocation across the host inner membrane. Interacts (via transmembrane domain) with host TolR (via transmembrane domain); this interaction allows the phage translocation across the host inner membrane.

The protein resides in the virion. Its subcellular location is the host membrane. Functionally, plays essential roles both in the penetration of the viral genome into the bacterial host via pilus retraction and in the extrusion process. During the initial step of infection, G3P mediates adsorption of the phage to its primary receptor, the tip of host F-pilus. Attachment of the phage causes pilus retraction bringing the viral particle into close proximity of the host cell inner membrane. Binding to the host pilus initiates a change in the G3P conformation, allowing subsequent interaction with the host entry receptors TolA, TolQ and TolR and penetration of the viral DNA into the host cytoplasm. In the extrusion process, G3P mediates the release of the membrane-anchored virion from the cell via its C-terminal domain. The sequence is that of Attachment protein G3P (III) from Enterobacteria phage fd (Bacteriophage fd).